We begin with the raw amino-acid sequence, 1196 residues long: Chromosome partition protein Smc (1196 aa).

Residue 32–39 (PNGSGKSN) participates in ATP binding. Coiled-coil stretches lie at residues 168-288 (LKHR…SVQQ) and 327-497 (DALE…LERK). The SMC hinge domain maps to 510–621 (AGILGPMAKL…VDDLDRALAL (112 aa)). 2 coiled-coil regions span residues 654–829 (LEVT…RAQQ) and 972–1026 (DRPT…KDLL).

This sequence belongs to the SMC family. In terms of assembly, homodimer.

It is found in the cytoplasm. Its function is as follows. Required for chromosome condensation and partitioning. The sequence is that of Chromosome partition protein Smc from Mycolicibacterium paratuberculosis (strain ATCC BAA-968 / K-10) (Mycobacterium paratuberculosis).